The sequence spans 490 residues: MERAKSRKPHIMMIPYPLQGHVIPFVHLAIKLASHGFTITFVNTDSIHHHISTAHQDDAGDIFSAARSSGQHDIRYTTVSDGFPLDFDRSLNHDQFFEGILHVFSAHVDDLIAKLSRRDDPPVTCLIADTFYVWSSMICDKHNLVNVSFWTEPALVLNLYYHMDLLISNGHFKSLDNRKDVIDYVPGVKAIEPKDLMSYLQVSDKDVDTNTVVYRILFKAFKDVKRADFVVCNTVQELEPDSLSALQAKQPVYAIGPVFSTDSVVPTSLWAESDCTEWLKGRPTGSVLYVSFGSYAHVGKKEIVEIAHGLLLSGISFIWVLRPDIVGSNVPDFLPAGFVDQAQDRGLVVQWCCQMEVISNPAVGGFFTHCGWNSILESVWCGLPLLCYPLLTDQFTNRKLVVDDWCIGINLCEKKTITRDQVSANVKRLMNGETSSELRNNVEKVKRHLKDAVTTVGSSETNFNLFVSEVRNRIETKLCNVNGLEISPSN.

UDP-alpha-D-glucose is bound by residues S294, 352–354 (CCQ), 369–377 (HCGWNSILE), and 391–394 (LTDQ).

This sequence belongs to the UDP-glycosyltransferase family.

The chain is UDP-glycosyltransferase 86A1 (UGT86A1) from Arabidopsis thaliana (Mouse-ear cress).